Reading from the N-terminus, the 726-residue chain is Disintegrin and metalloproteinase domain-containing protein 20 (726 aa).

Positions 1-31 (MAVGEPLVHIRVTLLLLWFGMFLSISGHSQA) are cleaved as a signal peptide. Positions 32–206 (RPSQYFTSPE…SSFVGWWTHQ (175 aa)) are excised as a propeptide. A Cysteine switch motif is present at residues 171–178 (MRCGLTEE). Cys173 is a Zn(2+) binding site. 2 N-linked (GlcNAc...) asparagine glycosylation sites follow: Asn191 and Asn226. Residues 207 to 400 (RFVELVVVVD…SGLCIQPPPY (194 aa)) enclose the Peptidase M12B domain. Over 207 to 693 (RFVELVVVVD…GLNVMGKLRY (487 aa)) the chain is Extracellular. Disulfide bonds link Cys317-Cys394, Cys357-Cys379, and Cys359-Cys364. His342 contacts Zn(2+). Glu343 is an active-site residue. Positions 346 and 352 each coordinate Zn(2+). 4 N-linked (GlcNAc...) asparagine glycosylation sites follow: Asn378, Asn438, Asn479, and Asn587. One can recognise a Disintegrin domain in the interval 407–493 (LKYCGNLVVE…QCPDDVYVQD (87 aa)). Cys465 and Cys485 are joined by a disulfide. Disulfide bonds link Cys635–Cys646, Cys640–Cys652, and Cys654–Cys663. The region spanning 635-663 (CQPKTCNMRGICNNKQHCHCNHEWAPPYC) is the EGF-like domain. Residues 694–714 (LSLLCLLPLVAFLLFCLHVLF) traverse the membrane as a helical segment. The Cytoplasmic segment spans residues 715 to 726 (KKRTKSKEDEEG).

Zn(2+) serves as cofactor. Has no obvious cleavage site for furin endopeptidase, suggesting that the proteolytic processing is regulated. In terms of tissue distribution, testis specific.

The protein resides in the membrane. May be involved in sperm maturation and/or fertilization. The sequence is that of Disintegrin and metalloproteinase domain-containing protein 20 (ADAM20) from Homo sapiens (Human).